The sequence spans 165 residues: Phosphopantetheine adenylyltransferase (165 aa).

Substrate is bound at residue S10. Residues 10–11 (SF) and H18 each bind ATP. Substrate-binding residues include K42, L74, and R88. Residues 89 to 91 (GLR), E99, and 124 to 130 (YSFLSSS) each bind ATP.

This sequence belongs to the bacterial CoaD family. In terms of assembly, homohexamer. Mg(2+) is required as a cofactor.

Its subcellular location is the cytoplasm. It catalyses the reaction (R)-4'-phosphopantetheine + ATP + H(+) = 3'-dephospho-CoA + diphosphate. The protein operates within cofactor biosynthesis; coenzyme A biosynthesis; CoA from (R)-pantothenate: step 4/5. Reversibly transfers an adenylyl group from ATP to 4'-phosphopantetheine, yielding dephospho-CoA (dPCoA) and pyrophosphate. The chain is Phosphopantetheine adenylyltransferase from Anoxybacillus flavithermus (strain DSM 21510 / WK1).